Consider the following 200-residue polypeptide: MTITTLTLGMILAAYLAGSISSAVLVCRLRGLPDPRTAGSGNPGATNVLRIGGASSAAMVLFFDMLKGALPAYIAFRLGIDQVALGAIAIAACLGHIFPIFFKFKGGKGVATAFGAMAPIGHELALALMVTWIVMVLISRYSSLAAITTAMLAPIYTWFLDERFTIPVAMLSTLIVIRHRDNIHRLLKGEESKVSRKKKG.

Helical transmembrane passes span 6-26, 56-76, 82-102, 118-138, and 141-161; these read LTLG…AVLV, SAAM…YIAF, QVAL…PIFF, APIG…MVLI, and YSSL…WFLD.

Belongs to the PlsY family. Probably interacts with PlsX.

The protein resides in the cell inner membrane. The enzyme catalyses an acyl phosphate + sn-glycerol 3-phosphate = a 1-acyl-sn-glycero-3-phosphate + phosphate. It functions in the pathway lipid metabolism; phospholipid metabolism. Its function is as follows. Catalyzes the transfer of an acyl group from acyl-phosphate (acyl-PO(4)) to glycerol-3-phosphate (G3P) to form lysophosphatidic acid (LPA). This enzyme utilizes acyl-phosphate as fatty acyl donor, but not acyl-CoA or acyl-ACP. This Shewanella sediminis (strain HAW-EB3) protein is Glycerol-3-phosphate acyltransferase.